A 156-amino-acid polypeptide reads, in one-letter code: Large ribosomal subunit protein uL30 (156 aa).

The protein belongs to the universal ribosomal protein uL30 family. Part of the 50S ribosomal subunit.

This is Large ribosomal subunit protein uL30 from Thermofilum pendens (strain DSM 2475 / Hrk 5).